The primary structure comprises 31 residues: GVIPCGESCVFIPCISSVVGCTCKNKVCYRN.

Residues 1–31 (GVIPCGESCVFIPCISSVVGCTCKNKVCYRN) constitute a cross-link (cyclopeptide (Gly-Asn)). Intrachain disulfides connect cysteine 5–cysteine 21, cysteine 9–cysteine 23, and cysteine 14–cysteine 28.

This is a cyclic peptide. In terms of processing, contains 3 disulfide bonds.

Probably participates in a plant defense mechanism (Potential). Binds to and induces leakage in phospholipd membranes, particularly ones containing 1-palmitoyl-2-oleophosphatidylethanolamine (POPE). This is Cyclotide mech-6 from Melicytus chathamicus (Chatham Island mahoe).